A 208-amino-acid polypeptide reads, in one-letter code: 3-demethoxyubiquinol 3-hydroxylase (208 aa).

Fe cation-binding residues include glutamate 57, glutamate 87, histidine 90, glutamate 139, glutamate 171, and histidine 174.

Belongs to the COQ7 family. Fe cation serves as cofactor.

The protein localises to the cell membrane. The enzyme catalyses a 5-methoxy-2-methyl-3-(all-trans-polyprenyl)benzene-1,4-diol + AH2 + O2 = a 3-demethylubiquinol + A + H2O. Its pathway is cofactor biosynthesis; ubiquinone biosynthesis. In terms of biological role, catalyzes the hydroxylation of 2-nonaprenyl-3-methyl-6-methoxy-1,4-benzoquinol during ubiquinone biosynthesis. The sequence is that of 3-demethoxyubiquinol 3-hydroxylase from Burkholderia mallei (strain NCTC 10229).